A 431-amino-acid polypeptide reads, in one-letter code: tRNA-2-methylthio-N(6)-dimethylallyladenosine synthase (431 aa).

The MTTase N-terminal domain maps to 2 to 117; the sequence is KKLFIETLGC…ITEVVDKKHA (116 aa). [4Fe-4S] cluster is bound by residues cysteine 11, cysteine 48, cysteine 80, cysteine 149, cysteine 153, and cysteine 156. Positions 135-368 constitute a Radical SAM core domain; sequence RTNPFKAMVN…QTRHTEILDE (234 aa). In terms of domain architecture, TRAM spans 371 to 431; the sequence is DAQLGKVHEV…SRGALDGVLV (61 aa).

Belongs to the methylthiotransferase family. MiaB subfamily. In terms of assembly, monomer. Requires [4Fe-4S] cluster as cofactor.

It localises to the cytoplasm. It catalyses the reaction N(6)-dimethylallyladenosine(37) in tRNA + (sulfur carrier)-SH + AH2 + 2 S-adenosyl-L-methionine = 2-methylsulfanyl-N(6)-dimethylallyladenosine(37) in tRNA + (sulfur carrier)-H + 5'-deoxyadenosine + L-methionine + A + S-adenosyl-L-homocysteine + 2 H(+). In terms of biological role, catalyzes the methylthiolation of N6-(dimethylallyl)adenosine (i(6)A), leading to the formation of 2-methylthio-N6-(dimethylallyl)adenosine (ms(2)i(6)A) at position 37 in tRNAs that read codons beginning with uridine. The sequence is that of tRNA-2-methylthio-N(6)-dimethylallyladenosine synthase from Sulfurovum sp. (strain NBC37-1).